Here is a 1190-residue protein sequence, read N- to C-terminus: DNA-directed RNA polymerase subunit beta (1190 aa).

The disordered stretch occupies residues 1155 to 1190; the sequence is ENFDDDDDHAPDAIMVDVKPAEREEAGEEKDAVTKE. Over residues 1173–1190 the composition is skewed to basic and acidic residues; sequence KPAEREEAGEEKDAVTKE.

This sequence belongs to the RNA polymerase beta chain family. The RNAP catalytic core consists of 2 alpha, 1 beta, 1 beta' and 1 omega subunit. When a sigma factor is associated with the core the holoenzyme is formed, which can initiate transcription.

The enzyme catalyses RNA(n) + a ribonucleoside 5'-triphosphate = RNA(n+1) + diphosphate. DNA-dependent RNA polymerase catalyzes the transcription of DNA into RNA using the four ribonucleoside triphosphates as substrates. The sequence is that of DNA-directed RNA polymerase subunit beta from Geobacillus kaustophilus (strain HTA426).